The sequence spans 110 residues: uncharacterized protein (110 aa).

A compositionally biased stretch (polar residues) spans 1-20; sequence MNQQNQKISNPQTPVPTTSE. The tract at residues 1-24 is disordered; that stretch reads MNQQNQKISNPQTPVPTTSEMNDR.

This is an uncharacterized protein from Bacillus subtilis (strain 168).